A 260-amino-acid chain; its full sequence is Phosphate import ATP-binding protein PstB 1 (260 aa).

The 248-residue stretch at 8–255 (TETKNVYDVL…PEHKRTEDYV (248 aa)) folds into the ABC transporter domain. ATP is bound at residue 46–53 (GPSGCGKS).

This sequence belongs to the ABC transporter superfamily. Phosphate importer (TC 3.A.1.7) family. In terms of assembly, the complex is composed of two ATP-binding proteins (PstB), two transmembrane proteins (PstC and PstA) and a solute-binding protein (PstS).

The protein localises to the cell membrane. It catalyses the reaction phosphate(out) + ATP + H2O = ADP + 2 phosphate(in) + H(+). In terms of biological role, part of the ABC transporter complex PstSACB involved in phosphate import. Responsible for energy coupling to the transport system. In Shouchella clausii (strain KSM-K16) (Alkalihalobacillus clausii), this protein is Phosphate import ATP-binding protein PstB 1.